The sequence spans 754 residues: Phosphatidylinositol 4-phosphate 5-kinase 7 (754 aa).

8 MORN repeats span residues 16–38 (YSGE…DGTI), 39–61 (YEGD…SGAK), 62–84 (YEGD…DESV), 85–107 (YSGA…NSDL), 108–130 (YDGL…NGNR), 131–153 (YIGN…NGDL), 154–176 (YDGF…DGCL), and 177–198 (YYGT…AGTK). Residues 329–750 (GEHNYYLMLN…RFVNFLHKVF (422 aa)) enclose the PIPK domain. The activation loop stretch occupies residues 710–731 (YNTKKKVEHTCKSLQYDPMTIS).

It catalyses the reaction a 1,2-diacyl-sn-glycero-3-phospho-(1D-myo-inositol 4-phosphate) + ATP = a 1,2-diacyl-sn-glycero-3-phospho-(1D-myo-inositol-4,5-bisphosphate) + ADP + H(+). This Arabidopsis thaliana (Mouse-ear cress) protein is Phosphatidylinositol 4-phosphate 5-kinase 7 (PIP5K7).